The primary structure comprises 145 residues: Putative transcriptional regulatory protein PYRAB13000 (145 aa).

It belongs to the Tfx family.

Its function is as follows. Putative transcriptional regulator. The protein is Putative transcriptional regulatory protein PYRAB13000 of Pyrococcus abyssi (strain GE5 / Orsay).